A 122-amino-acid chain; its full sequence is Probable F-box protein At4g23960 (122 aa).

The F-box domain maps to Met-1–Leu-45.

This Arabidopsis thaliana (Mouse-ear cress) protein is Probable F-box protein At4g23960.